Consider the following 149-residue polypeptide: D-aminoacyl-tRNA deacylase (149 aa).

The Gly-cisPro motif, important for rejection of L-amino acids signature appears at 141–142; the sequence is GP.

This sequence belongs to the DTD family. As to quaternary structure, homodimer.

The protein resides in the cytoplasm. It catalyses the reaction glycyl-tRNA(Ala) + H2O = tRNA(Ala) + glycine + H(+). The enzyme catalyses a D-aminoacyl-tRNA + H2O = a tRNA + a D-alpha-amino acid + H(+). An aminoacyl-tRNA editing enzyme that deacylates mischarged D-aminoacyl-tRNAs. Also deacylates mischarged glycyl-tRNA(Ala), protecting cells against glycine mischarging by AlaRS. Acts via tRNA-based rather than protein-based catalysis; rejects L-amino acids rather than detecting D-amino acids in the active site. By recycling D-aminoacyl-tRNA to D-amino acids and free tRNA molecules, this enzyme counteracts the toxicity associated with the formation of D-aminoacyl-tRNA entities in vivo and helps enforce protein L-homochirality. The protein is D-aminoacyl-tRNA deacylase of Streptomyces griseus subsp. griseus (strain JCM 4626 / CBS 651.72 / NBRC 13350 / KCC S-0626 / ISP 5235).